We begin with the raw amino-acid sequence, 256 residues long: tRNA (guanine-N(7)-)-methyltransferase (256 aa).

4 residues coordinate S-adenosyl-L-methionine: Glu85, Glu110, Asp137, and Asp159. Asp159 is a catalytic residue. Residues Lys163 and Asp195 each coordinate substrate.

This sequence belongs to the class I-like SAM-binding methyltransferase superfamily. TrmB family.

It catalyses the reaction guanosine(46) in tRNA + S-adenosyl-L-methionine = N(7)-methylguanosine(46) in tRNA + S-adenosyl-L-homocysteine. It participates in tRNA modification; N(7)-methylguanine-tRNA biosynthesis. Functionally, catalyzes the formation of N(7)-methylguanine at position 46 (m7G46) in tRNA. This is tRNA (guanine-N(7)-)-methyltransferase from Rhodopseudomonas palustris (strain BisB5).